Consider the following 153-residue polypeptide: UPF0178 protein Atu1478 (153 aa).

The protein belongs to the UPF0178 family.

The sequence is that of UPF0178 protein Atu1478 from Agrobacterium fabrum (strain C58 / ATCC 33970) (Agrobacterium tumefaciens (strain C58)).